The following is a 924-amino-acid chain: Protein SMAX1-LIKE 2 (924 aa).

Positions 8–181 (IQQTLTPEAA…SAIEQSLIGN (174 aa)) constitute a Clp R domain. The interval 12-83 (LTPEAATVLN…LCFSVALERL (72 aa)) is repeat 1. Positions 86–105 (TSTTTTTTSSSSSSSPSQTQ) are enriched in low complexity. The segment at 86–107 (TSTTTTTTSSSSSSSPSQTQEP) is disordered. The segment at 109 to 181 (LSNALTAALK…SAIEQSLIGN (73 aa)) is repeat 2. The interval 522–552 (TRSDITPPGSPVGTDLVLGRPNRGLSSPEKK) is disordered. Positions 780-784 (FDLNE) match the EAR motif.

It belongs to the ClpA/ClpB family. Interacts probably with TPL/TPR in an EAR-motif dependent manner. In terms of tissue distribution, expressed in seedlings and leaves. Detected in roots and axillary branches.

Its function is as follows. Probable component of a transcriptional corepressor complex that acts specifically in the karrikin pathway. Controls seedling growth redundantly with SMAX1, but is not involved in leaf morphology, shoot branching or germination control. The chain is Protein SMAX1-LIKE 2 from Arabidopsis thaliana (Mouse-ear cress).